The sequence spans 177 residues: Large ribosomal subunit protein uL10 (177 aa).

It belongs to the universal ribosomal protein uL10 family. As to quaternary structure, part of the ribosomal stalk of the 50S ribosomal subunit. The N-terminus interacts with L11 and the large rRNA to form the base of the stalk. The C-terminus forms an elongated spine to which L12 dimers bind in a sequential fashion forming a multimeric L10(L12)X complex.

In terms of biological role, forms part of the ribosomal stalk, playing a central role in the interaction of the ribosome with GTP-bound translation factors. This chain is Large ribosomal subunit protein uL10, found in Xanthomonas axonopodis pv. citri (strain 306).